We begin with the raw amino-acid sequence, 315 residues long: COMPASS component SWD3 (315 aa).

WD repeat units lie at residues 53-93 (SHAR…HTFI), 94-133 (GHTA…LMKT), 136-178 (AHSE…KTLT), 187-228 (NGVV…RTFQ), 238-278 (HHSC…LLQL), and 285-315 (HHSS…WRWV).

As to quaternary structure, component of the Set1C/COMPASS complex which consists of SET1(2), BRE2(2), SPP1(2), SDC1(1), SHG1(1), SWD1(1), SWD2(1), and SWD3(1).

It is found in the nucleus. The protein localises to the chromosome. The protein resides in the telomere. In terms of biological role, the COMPASS (Set1C) complex specifically mono-, di- and trimethylates histone H3 to form H3K4me1/2/3, which subsequently plays a role in telomere length maintenance and transcription elongation regulation. COMPASS recognizes ubiquitinated H2B on one face of the nucleosome which stimulates the methylation of H3 on the opposing face. SWD3/CPS30 establishes COMPASS trimethylation activity and may also serve as the anchor point to properly tether and space the other subunits. The chain is COMPASS component SWD3 from Saccharomyces cerevisiae (strain ATCC 204508 / S288c) (Baker's yeast).